The sequence spans 421 residues: 4-hydroxy-3-methylbut-2-en-1-yl diphosphate synthase (flavodoxin) (421 aa).

4 residues coordinate [4Fe-4S] cluster: cysteine 298, cysteine 301, cysteine 344, and glutamate 351.

The protein belongs to the IspG family. [4Fe-4S] cluster is required as a cofactor.

It catalyses the reaction (2E)-4-hydroxy-3-methylbut-2-enyl diphosphate + oxidized [flavodoxin] + H2O + 2 H(+) = 2-C-methyl-D-erythritol 2,4-cyclic diphosphate + reduced [flavodoxin]. It functions in the pathway isoprenoid biosynthesis; isopentenyl diphosphate biosynthesis via DXP pathway; isopentenyl diphosphate from 1-deoxy-D-xylulose 5-phosphate: step 5/6. Converts 2C-methyl-D-erythritol 2,4-cyclodiphosphate (ME-2,4cPP) into 1-hydroxy-2-methyl-2-(E)-butenyl 4-diphosphate. The protein is 4-hydroxy-3-methylbut-2-en-1-yl diphosphate synthase (flavodoxin) of Neisseria gonorrhoeae (strain ATCC 700825 / FA 1090).